The following is a 172-amino-acid chain: Cytochrome c oxidase subunit 4 isoform 2, mitochondrial (172 aa).

A mitochondrion-targeting transit peptide spans 1–18 (MFSRATRSLVMKTGGLRT). The tract at residues 1–33 (MFSRATRSLVMKTGGLRTQGTHSPGSAASSSQR) is disordered. The segment covering 16–33 (LRTQGTHSPGSAASSSQR) has biased composition (polar residues). Over 19–101 (QGTHSPGSAA…TFAEMNHRSN (83 aa)) the chain is Mitochondrial matrix. Residues 102-127 (EWKTVMGCVFFFIGFTALVIWWQRVY) form a helical membrane-spanning segment. The Mitochondrial intermembrane portion of the chain corresponds to 128-172 (VFPKKVVTLTEERKAQQLQRLLDMKSNPIQGLSAHWDYEKKEWKK).

It belongs to the cytochrome c oxidase IV family. As to quaternary structure, component of the cytochrome c oxidase (complex IV, CIV), a multisubunit enzyme composed of 14 subunits. The complex is composed of a catalytic core of 3 subunits MT-CO1, MT-CO2 and MT-CO3, encoded in the mitochondrial DNA, and 11 supernumerary subunits COX4I, COX5A, COX5B, COX6A, COX6B, COX6C, COX7A, COX7B, COX7C, COX8 and NDUFA4, which are encoded in the nuclear genome. The complex exists as a monomer or a dimer and forms supercomplexes (SCs) in the inner mitochondrial membrane with NADH-ubiquinone oxidoreductase (complex I, CI) and ubiquinol-cytochrome c oxidoreductase (cytochrome b-c1 complex, complex III, CIII), resulting in different assemblies (supercomplex SCI(1)III(2)IV(1) and megacomplex MCI(2)III(2)IV(2)). In terms of tissue distribution, highly expressed in lung.

Its subcellular location is the mitochondrion inner membrane. The protein operates within energy metabolism; oxidative phosphorylation. In terms of biological role, component of the cytochrome c oxidase, the last enzyme in the mitochondrial electron transport chain which drives oxidative phosphorylation. The respiratory chain contains 3 multisubunit complexes succinate dehydrogenase (complex II, CII), ubiquinol-cytochrome c oxidoreductase (cytochrome b-c1 complex, complex III, CIII) and cytochrome c oxidase (complex IV, CIV), that cooperate to transfer electrons derived from NADH and succinate to molecular oxygen, creating an electrochemical gradient over the inner membrane that drives transmembrane transport and the ATP synthase. Cytochrome c oxidase is the component of the respiratory chain that catalyzes the reduction of oxygen to water. Electrons originating from reduced cytochrome c in the intermembrane space (IMS) are transferred via the dinuclear copper A center (CU(A)) of subunit 2 and heme A of subunit 1 to the active site in subunit 1, a binuclear center (BNC) formed by heme A3 and copper B (CU(B)). The BNC reduces molecular oxygen to 2 water molecules using 4 electrons from cytochrome c in the IMS and 4 protons from the mitochondrial matrix. In Rattus norvegicus (Rat), this protein is Cytochrome c oxidase subunit 4 isoform 2, mitochondrial (Cox4i2).